The chain runs to 260 residues: tRNA pseudouridine synthase A (260 aa).

Catalysis depends on Asp52, which acts as the Nucleophile. Tyr111 contacts substrate.

It belongs to the tRNA pseudouridine synthase TruA family. As to quaternary structure, homodimer.

The catalysed reaction is uridine(38/39/40) in tRNA = pseudouridine(38/39/40) in tRNA. Functionally, formation of pseudouridine at positions 38, 39 and 40 in the anticodon stem and loop of transfer RNAs. This is tRNA pseudouridine synthase A from Roseobacter denitrificans (strain ATCC 33942 / OCh 114) (Erythrobacter sp. (strain OCh 114)).